Consider the following 341-residue polypeptide: Glycerol-3-phosphate dehydrogenase [NAD(P)+] (341 aa).

Residues S14, F15, R35, and K108 each contribute to the NADPH site. Positions 108 and 136 each coordinate sn-glycerol 3-phosphate. Residue A140 participates in NADPH binding. Sn-glycerol 3-phosphate is bound by residues K191, D244, S254, R255, and N256. K191 (proton acceptor) is an active-site residue. R255 provides a ligand contact to NADPH. NADPH is bound by residues V279 and E281.

Belongs to the NAD-dependent glycerol-3-phosphate dehydrogenase family.

The protein localises to the cytoplasm. It catalyses the reaction sn-glycerol 3-phosphate + NAD(+) = dihydroxyacetone phosphate + NADH + H(+). The enzyme catalyses sn-glycerol 3-phosphate + NADP(+) = dihydroxyacetone phosphate + NADPH + H(+). The protein operates within membrane lipid metabolism; glycerophospholipid metabolism. Functionally, catalyzes the reduction of the glycolytic intermediate dihydroxyacetone phosphate (DHAP) to sn-glycerol 3-phosphate (G3P), the key precursor for phospholipid synthesis. This is Glycerol-3-phosphate dehydrogenase [NAD(P)+] from Pseudomonas entomophila (strain L48).